Here is a 503-residue protein sequence, read N- to C-terminus: Opine oxidase subunit A (503 aa).

This sequence to T-protein and to dimethylglycine dehydrogenase. As to quaternary structure, heterodimer of a subunit A and a subunit B.

It participates in opine metabolism; octopine degradation. Oxidative cleavage of octopine into L-arginine and pyruvate. This is Opine oxidase subunit A (ooxA) from Agrobacterium tumefaciens (strain Ach5).